The chain runs to 285 residues: S-methyl-5'-thioadenosine phosphorylase (285 aa).

Phosphate contacts are provided by residues serine 10, 52-53 (RH), and 85-86 (TA). Position 188 (methionine 188) interacts with substrate. Phosphate is bound at residue threonine 189. 212–214 (DYD) is a substrate binding site.

The protein belongs to the PNP/MTAP phosphorylase family. MTAP subfamily. Homotrimer.

The protein resides in the cytoplasm. It localises to the nucleus. The enzyme catalyses S-methyl-5'-thioadenosine + phosphate = 5-(methylsulfanyl)-alpha-D-ribose 1-phosphate + adenine. It participates in amino-acid biosynthesis; L-methionine biosynthesis via salvage pathway; S-methyl-5-thio-alpha-D-ribose 1-phosphate from S-methyl-5'-thioadenosine (phosphorylase route): step 1/1. Its function is as follows. Catalyzes the reversible phosphorylation of S-methyl-5'-thioadenosine (MTA) to adenine and 5-methylthioribose-1-phosphate. Involved in the breakdown of MTA, a major by-product of polyamine biosynthesis. Responsible for the first step in the methionine salvage pathway after MTA has been generated from S-adenosylmethionine. Has broad substrate specificity with 6-aminopurine nucleosides as preferred substrates. This Caenorhabditis briggsae protein is S-methyl-5'-thioadenosine phosphorylase.